The following is a 781-amino-acid chain: Molybdenum cofactor sulfurase (781 aa).

Lysine 246 is modified (N6-(pyridoxal phosphate)lysine). Cysteine 413 is a catalytic residue. One can recognise an MOSC domain in the interval 619 to 781 (GDAVAQWLSE…MTCGDVVIVE (163 aa)). Residue serine 734 is modified to Phosphoserine.

The protein belongs to the class-V pyridoxal-phosphate-dependent aminotransferase family. MOCOS subfamily. The cofactor is pyridoxal 5'-phosphate.

It catalyses the reaction Mo-molybdopterin + L-cysteine + AH2 = thio-Mo-molybdopterin + L-alanine + A + H2O. It participates in cofactor biosynthesis; molybdopterin biosynthesis. Sulfurates the molybdenum cofactor. Sulfation of molybdenum is essential for xanthine dehydrogenase (XDH) and aldehyde oxidase (ADO) enzymes in which molybdenum cofactor is liganded by 1 oxygen and 1 sulfur atom in active form. This is Molybdenum cofactor sulfurase from Drosophila erecta (Fruit fly).